Reading from the N-terminus, the 423-residue chain is Adenylosuccinate synthetase (423 aa).

GTP contacts are provided by residues 12-18 (GDEGKGK) and 40-42 (GHT). D13 functions as the Proton acceptor in the catalytic mechanism. Residues D13 and G40 each contribute to the Mg(2+) site. IMP contacts are provided by residues 13–16 (DEGK), 38–41 (NAGH), T129, R143, Q221, T236, and R300. H41 (proton donor) is an active-site residue. Position 296–302 (296–302 (SVTGRKR)) interacts with substrate. Residues R302 and 408 to 410 (SVG) contribute to the GTP site.

Belongs to the adenylosuccinate synthetase family. As to quaternary structure, homodimer. The cofactor is Mg(2+).

The protein localises to the cytoplasm. It carries out the reaction IMP + L-aspartate + GTP = N(6)-(1,2-dicarboxyethyl)-AMP + GDP + phosphate + 2 H(+). It participates in purine metabolism; AMP biosynthesis via de novo pathway; AMP from IMP: step 1/2. Its function is as follows. Plays an important role in the de novo pathway of purine nucleotide biosynthesis. Catalyzes the first committed step in the biosynthesis of AMP from IMP. The protein is Adenylosuccinate synthetase of Bacteroides thetaiotaomicron (strain ATCC 29148 / DSM 2079 / JCM 5827 / CCUG 10774 / NCTC 10582 / VPI-5482 / E50).